The sequence spans 1079 residues: Psi-producing oxygenase A (1079 aa).

Residues threonine 105–valine 446 form a linoleate 8R-lipoxygenase region. Histidine 202 contacts heme b. Residue tyrosine 374 is part of the active site. Heme b is bound at residue histidine 377. Residues glutamine 654 to glutamate 1079 are 9,12-octadecadienoate 8-hydroperoxide 8R-isomerase.

The protein belongs to the peroxidase family. Homotetramer. Heme b serves as cofactor.

It carries out the reaction (9Z,12Z)-octadecadienoate + O2 = (8R,9Z,12Z)-8-hydroperoxyoctadeca-9,12-dienoate. The enzyme catalyses (8R,9Z,12Z)-8-hydroperoxyoctadeca-9,12-dienoate = (5S,8R,9Z,12Z)-5,8-dihydroxyoctadeca-9,12-dienoate. Functionally, bifunctional heme-containing enzyme that oxidizes linoleic acid to (8R,9Z,12Z)-8-hydroperoxyoctadeca-9,12-dienoate (within the N-terminal heme peroxidase domain), which is subsequently isomerized to (5S,8R,9Z,12Z)-5,8-dihydroxyoctadeca-9,12-dienoate (within the C-terminal P450 heme thiolate domain). Oxidized unsaturated fatty acids, so-called oxylipins, derived from endogenous fatty acids, influence the development of the asexual conidiophores and sexual cleistothecia and regulate the secondary metabolism. These substances were collectively named psi factors and are primarily a mixture of hydroxylated oleic, linoleic and alpha-linolenic acids. They are termed psi-beta, psi-alpha, and psi-gamma, respectively. Oxylipins may also serve as activators of mammalian immune responses contributing to enhanced resistance to opportunistic fungi and as factors that modulate fungal development contributing to resistance to host defenses. This is Psi-producing oxygenase A (ppoA) from Aspergillus fumigatus (strain ATCC MYA-4609 / CBS 101355 / FGSC A1100 / Af293) (Neosartorya fumigata).